We begin with the raw amino-acid sequence, 232 residues long: Large ribosomal subunit protein uL1 (232 aa).

It belongs to the universal ribosomal protein uL1 family. Part of the 50S ribosomal subunit.

Functionally, binds directly to 23S rRNA. The L1 stalk is quite mobile in the ribosome, and is involved in E site tRNA release. Its function is as follows. Protein L1 is also a translational repressor protein, it controls the translation of the L11 operon by binding to its mRNA. The sequence is that of Large ribosomal subunit protein uL1 from Colwellia psychrerythraea (strain 34H / ATCC BAA-681) (Vibrio psychroerythus).